The chain runs to 531 residues: L-aspartate oxidase (531 aa).

FAD is bound by residues 11 to 14, Lys-33, 40 to 47, 151 to 152, and Asp-205; these read SGAA, NSVYAQGG, and TA. Residue Arg-272 is the Proton donor/acceptor of the active site. Residues Glu-353 and 369–370 contribute to the FAD site; that span reads SL.

This sequence belongs to the FAD-dependent oxidoreductase 2 family. NadB subfamily. In terms of assembly, monomer. Homodimer. FAD serves as cofactor.

It localises to the cytoplasm. The enzyme catalyses L-aspartate + O2 = iminosuccinate + H2O2. It catalyses the reaction fumarate + L-aspartate = iminosuccinate + succinate. It participates in cofactor biosynthesis; NAD(+) biosynthesis; iminoaspartate from L-aspartate (oxidase route): step 1/1. Its function is as follows. Catalyzes the oxidation of L-aspartate to iminoaspartate, the first step in the de novo biosynthesis of NAD(+). Can use either oxygen or fumarate as electron acceptors, which allows the enzyme to be functional under aerobic and anaerobic conditions. This Bacillus subtilis (strain 168) protein is L-aspartate oxidase.